The following is a 366-amino-acid chain: Elongation factor Ts, mitochondrial (366 aa).

A mitochondrion-targeting transit peptide spans 1 to 50 (MAWSQSARKPMIGLLFRAQQHSARGYSYSAFQAHLSSSNVDQSATLLRRF).

The protein belongs to the EF-Ts family.

Its subcellular location is the mitochondrion. Its function is as follows. Associates with the EF-Tu.GDP complex and induces the exchange of GDP to GTP. It remains bound to the aminoacyl-tRNA.EF-Tu.GTP complex up to the GTP hydrolysis stage on the ribosome. In Oryza sativa subsp. japonica (Rice), this protein is Elongation factor Ts, mitochondrial.